Reading from the N-terminus, the 702-residue chain is Elongation factor G 2 (702 aa).

Residues 8-291 (ELYRNIGIVA…AVIDYLPAPS (284 aa)) form the tr-type G domain. Residues 17–24 (AHVDAGKT), 89–93 (DTPGH), and 143–146 (NKMD) each bind GTP. The interval 293-314 (IPAIRGTDPDDEEKHDERHADD) is disordered.

It belongs to the TRAFAC class translation factor GTPase superfamily. Classic translation factor GTPase family. EF-G/EF-2 subfamily.

The protein resides in the cytoplasm. In terms of biological role, catalyzes the GTP-dependent ribosomal translocation step during translation elongation. During this step, the ribosome changes from the pre-translocational (PRE) to the post-translocational (POST) state as the newly formed A-site-bound peptidyl-tRNA and P-site-bound deacylated tRNA move to the P and E sites, respectively. Catalyzes the coordinated movement of the two tRNA molecules, the mRNA and conformational changes in the ribosome. The sequence is that of Elongation factor G 2 (fusB) from Pseudomonas aeruginosa (strain ATCC 15692 / DSM 22644 / CIP 104116 / JCM 14847 / LMG 12228 / 1C / PRS 101 / PAO1).